A 285-amino-acid polypeptide reads, in one-letter code: 1,4-dihydroxy-2-naphthoyl-CoA synthase (285 aa).

Residues arginine 45, 84–88 (SGGDQ), tyrosine 97, 129–133 (YAIGG), threonine 155, serine 161, tyrosine 258, and lysine 273 contribute to the substrate site. 154–156 (QTG) contributes to the hydrogencarbonate binding site.

The protein belongs to the enoyl-CoA hydratase/isomerase family. MenB subfamily. Hydrogencarbonate is required as a cofactor.

The enzyme catalyses 2-succinylbenzoyl-CoA + H(+) = 1,4-dihydroxy-2-naphthoyl-CoA + H2O. It participates in quinol/quinone metabolism; 1,4-dihydroxy-2-naphthoate biosynthesis; 1,4-dihydroxy-2-naphthoate from chorismate: step 6/7. Its pathway is quinol/quinone metabolism; menaquinone biosynthesis. In terms of biological role, converts o-succinylbenzoyl-CoA (OSB-CoA) to 1,4-dihydroxy-2-naphthoyl-CoA (DHNA-CoA). In Haemophilus influenzae (strain ATCC 51907 / DSM 11121 / KW20 / Rd), this protein is 1,4-dihydroxy-2-naphthoyl-CoA synthase.